A 371-amino-acid polypeptide reads, in one-letter code: Macrolide export protein MacA (371 aa).

Residues 1–10 (MKKRKTVKKR) lie on the Cytoplasmic side of the membrane. The chain crosses the membrane as a helical span at residues 11-31 (YVIALVIVIAGLITLWRILNA). Over 32-371 (PVPTYQTLIV…IGEAKPGAAQ (340 aa)) the chain is Periplasmic. Positions 92-137 (IDPEQAENQIKEVEATLMELRAQRQQAEAELKLARVTYSRQQRLAQ) form a coiled coil.

The protein belongs to the membrane fusion protein (MFP) (TC 8.A.1) family. In terms of assembly, homohexamer. Part of the tripartite efflux system MacAB-TolC, which is composed of an inner membrane transporter, MacB, a periplasmic membrane fusion protein, MacA, and an outer membrane component, TolC. The complex forms a large protein conduit and can translocate molecules across both the inner and outer membranes. MacA interacts with MacB and TolC.

It is found in the cell inner membrane. Functionally, part of the tripartite efflux system MacAB-TolC. MacA stimulates the ATPase activity of MacB by promoting the closed ATP-bound state of MacB, increases the capacity of MacB to bind macrolides such as erythromycin, and provides a physical link between MacB and TolC. Confers resistance against macrolides. In Escherichia coli O157:H7, this protein is Macrolide export protein MacA (macA).